A 151-amino-acid chain; its full sequence is D-aminoacyl-tRNA deacylase (151 aa).

The short motif at 136-137 (GP) is the Gly-cisPro motif, important for rejection of L-amino acids element.

The protein belongs to the DTD family. In terms of assembly, homodimer.

It localises to the cytoplasm. It catalyses the reaction glycyl-tRNA(Ala) + H2O = tRNA(Ala) + glycine + H(+). The enzyme catalyses a D-aminoacyl-tRNA + H2O = a tRNA + a D-alpha-amino acid + H(+). Functionally, an aminoacyl-tRNA editing enzyme that deacylates mischarged D-aminoacyl-tRNAs. Also deacylates mischarged glycyl-tRNA(Ala), protecting cells against glycine mischarging by AlaRS. Acts via tRNA-based rather than protein-based catalysis; rejects L-amino acids rather than detecting D-amino acids in the active site. By recycling D-aminoacyl-tRNA to D-amino acids and free tRNA molecules, this enzyme counteracts the toxicity associated with the formation of D-aminoacyl-tRNA entities in vivo and helps enforce protein L-homochirality. This Lactococcus lactis subsp. cremoris (strain MG1363) protein is D-aminoacyl-tRNA deacylase.